The primary structure comprises 202 residues: Holliday junction branch migration complex subunit RuvA (202 aa).

Residues 1–65 (MIAYVEGRVA…EDALELFGFS (65 aa)) are domain I. Residues 66-144 (TWDERQTFMV…VEDLPAGLVL (79 aa)) are domain II. Residues 145–155 (AGGAAPGGVFR) form a flexible linker region. The domain III stretch occupies residues 155–202 (RDALAGLGNLGYLEDEAAPVLKEVLKAEPDLDVAGALRAALKALARGR).

It belongs to the RuvA family. Homotetramer. Forms an RuvA(8)-RuvB(12)-Holliday junction (HJ) complex. HJ DNA is sandwiched between 2 RuvA tetramers; dsDNA enters through RuvA and exits via RuvB. An RuvB hexamer assembles on each DNA strand where it exits the tetramer. Each RuvB hexamer is contacted by two RuvA subunits (via domain III) on 2 adjacent RuvB subunits; this complex drives branch migration. In the full resolvosome a probable DNA-RuvA(4)-RuvB(12)-RuvC(2) complex forms which resolves the HJ.

It localises to the cytoplasm. The RuvA-RuvB-RuvC complex processes Holliday junction (HJ) DNA during genetic recombination and DNA repair, while the RuvA-RuvB complex plays an important role in the rescue of blocked DNA replication forks via replication fork reversal (RFR). RuvA specifically binds to HJ cruciform DNA, conferring on it an open structure. The RuvB hexamer acts as an ATP-dependent pump, pulling dsDNA into and through the RuvAB complex. HJ branch migration allows RuvC to scan DNA until it finds its consensus sequence, where it cleaves and resolves the cruciform DNA. This Nitratidesulfovibrio vulgaris (strain DSM 19637 / Miyazaki F) (Desulfovibrio vulgaris) protein is Holliday junction branch migration complex subunit RuvA.